A 578-amino-acid chain; its full sequence is Proline--tRNA ligase (578 aa).

This sequence belongs to the class-II aminoacyl-tRNA synthetase family. ProS type 1 subfamily. As to quaternary structure, homodimer.

Its subcellular location is the cytoplasm. The enzyme catalyses tRNA(Pro) + L-proline + ATP = L-prolyl-tRNA(Pro) + AMP + diphosphate. Its function is as follows. Catalyzes the attachment of proline to tRNA(Pro) in a two-step reaction: proline is first activated by ATP to form Pro-AMP and then transferred to the acceptor end of tRNA(Pro). As ProRS can inadvertently accommodate and process non-cognate amino acids such as alanine and cysteine, to avoid such errors it has two additional distinct editing activities against alanine. One activity is designated as 'pretransfer' editing and involves the tRNA(Pro)-independent hydrolysis of activated Ala-AMP. The other activity is designated 'posttransfer' editing and involves deacylation of mischarged Ala-tRNA(Pro). The misacylated Cys-tRNA(Pro) is not edited by ProRS. This Burkholderia multivorans (strain ATCC 17616 / 249) protein is Proline--tRNA ligase.